Here is a 1025-residue protein sequence, read N- to C-terminus: DNA polymerase (1025 aa).

It belongs to the DNA polymerase type-B family.

It carries out the reaction DNA(n) + a 2'-deoxyribonucleoside 5'-triphosphate = DNA(n+1) + diphosphate. Functionally, replicates the viral genome. Host DNA polymerases cannot substitute for the viral enzyme in this process. The polypeptide is DNA polymerase (Noctuidae (owlet moths)).